The following is a 944-amino-acid chain: Translation initiation factor IF-2 (944 aa).

Over residues 55–81 (LTGQAAAPAAAPSSAPRPGARSSAPKP) the composition is skewed to low complexity. The interval 55-329 (LTGQAAAPAA…RTKRAEFELR (275 aa)) is disordered. The span at 82–92 (GGRPTPGPQPT) shows a compositional bias: pro residues. Low complexity predominate over residues 93 to 107 (AAPEVEAPEASDVPV). A compositionally biased stretch (basic and acidic residues) spans 123–135 (ASRKAAAEEKAQA). Low complexity-rich tracts occupy residues 136 to 153 (EKSA…ETPS) and 211 to 222 (GQRPAAGAAGPR). The span at 223–236 (PAAPRPGSPRPGAP) shows a compositional bias: pro residues. A compositionally biased stretch (low complexity) spans 244–257 (GARPAGFGQRPAGA). The segment covering 258 to 269 (GRPGGAPGGAGR) has biased composition (gly residues). The segment covering 270-283 (PGAPAAGGFQRPAG) has biased composition (low complexity). Residues 284 to 310 (GFAGRPGGGGRGRGPGGGTAGAFGRGG) show a composition bias toward gly residues. The span at 311–322 (GKSKSRKSKRTK) shows a compositional bias: basic residues. A tr-type G domain is found at 437-611 (IRPPVVTVMG…LTADAGLDLR (175 aa)). The interval 446–453 (GHVDHGKT) is G1. Residue 446–453 (GHVDHGKT) participates in GTP binding. The G2 stretch occupies residues 471–475 (GITQH). Positions 496–499 (DTPG) are G3. Residues 496-500 (DTPGH) and 550-553 (NKVD) contribute to the GTP site. The tract at residues 550–553 (NKVD) is G4. The interval 586 to 588 (SAL) is G5.

Belongs to the TRAFAC class translation factor GTPase superfamily. Classic translation factor GTPase family. IF-2 subfamily.

The protein localises to the cytoplasm. Its function is as follows. One of the essential components for the initiation of protein synthesis. Protects formylmethionyl-tRNA from spontaneous hydrolysis and promotes its binding to the 30S ribosomal subunits. Also involved in the hydrolysis of GTP during the formation of the 70S ribosomal complex. The polypeptide is Translation initiation factor IF-2 (Clavibacter michiganensis subsp. michiganensis (strain NCPPB 382)).